Consider the following 638-residue polypeptide: Sodium- and chloride-dependent neutral and basic amino acid transporter B(0+) (638 aa).

At 1-44 (MDRLKCPNFFKCRQKEKVTASSENFHVGENDENQERGNWSKKSD) the chain is on the cytoplasmic side. A run of 3 helical transmembrane segments spans residues 45–65 (YLLS…FPYL), 72–92 (GAFL…LFFL), and 110–130 (ILPL…FVAI). Over 131-230 (YYNVIIAYSL…RSSGMDETGV (100 aa)) the chain is Extracellular. Asn155, Asn163, Asn174, Asn185, Asn193, and Asn198 each carry an N-linked (GlcNAc...) asparagine glycan. 2 helical membrane-spanning segments follow: residues 231–251 (VVWY…AALF) and 257–277 (SGKV…ILLI). Asn298 carries N-linked (GlcNAc...) asparagine glycosylation. The next 7 membrane-spanning stretches (helical) occupy residues 311–331 (AATQ…ALSS), 344–364 (IIVC…IFSI), 395–415 (LAQL…LLTL), 453–473 (ILFL…VHLI), 476–496 (FCAG…IIWI), 524–544 (CWFV…LVKF), and 559–579 (VALG…MAII). The Cytoplasmic portion of the chain corresponds to 580–638 (KIVQAEGNILQRIISCCRPASNWGPYLEKHRGERYRDMAEPAKETDHEIPTISGSTKPE). The span at 618 to 628 (AEPAKETDHEI) shows a compositional bias: basic and acidic residues. The interval 618 to 638 (AEPAKETDHEIPTISGSTKPE) is disordered.

This sequence belongs to the sodium:neurotransmitter symporter (SNF) (TC 2.A.22) family. SLC6A14 subfamily. Expressed in the distal region of the intestinal tract: cecum and colon.

The protein resides in the membrane. It localises to the apical cell membrane. It catalyses the reaction glycine(out) + chloride(out) + 2 Na(+)(out) = glycine(in) + chloride(in) + 2 Na(+)(in). It carries out the reaction L-leucine(out) + chloride(out) + 2 Na(+)(out) = L-leucine(in) + chloride(in) + 2 Na(+)(in). The enzyme catalyses L-glutamine(out) + chloride(out) + 2 Na(+)(out) = L-glutamine(in) + chloride(in) + 2 Na(+)(in). The catalysed reaction is L-arginine(out) + chloride(out) + 2 Na(+)(out) = L-arginine(in) + chloride(in) + 2 Na(+)(in). It catalyses the reaction (R)-carnitine(out) + chloride(out) + 2 Na(+)(out) = (R)-carnitine(in) + chloride(in) + 2 Na(+)(in). It carries out the reaction O-propanoyl-(R)-carnitine(out) + chloride(out) + 2 Na(+)(out) = O-propanoyl-(R)-carnitine(in) + chloride(in) + 2 Na(+)(in). The enzyme catalyses L-isoleucine(out) + chloride(out) + 2 Na(+)(out) = L-isoleucine(in) + chloride(in) + 2 Na(+)(in). The catalysed reaction is L-methionine(out) + chloride(out) + 2 Na(+)(out) = L-methionine(in) + chloride(in) + 2 Na(+)(in). It catalyses the reaction L-valine(out) + chloride(out) + 2 Na(+)(out) = L-valine(in) + chloride(in) + 2 Na(+)(in). It carries out the reaction L-alanine(out) + chloride(out) + 2 Na(+)(out) = L-alanine(in) + chloride(in) + 2 Na(+)(in). The enzyme catalyses L-serine(out) + chloride(out) + 2 Na(+)(out) = L-serine(in) + chloride(in) + 2 Na(+)(in). The catalysed reaction is L-cysteine(out) + chloride(out) + 2 Na(+)(out) = L-cysteine(in) + chloride(in) + 2 Na(+)(in). It catalyses the reaction L-asparagine(out) + chloride(out) + 2 Na(+)(out) = L-asparagine(in) + chloride(in) + 2 Na(+)(in). It carries out the reaction L-threonine(out) + chloride(out) + 2 Na(+)(out) = L-threonine(in) + chloride(in) + 2 Na(+)(in). The enzyme catalyses L-phenylalanine(out) + chloride(out) + 2 Na(+)(out) = L-phenylalanine(in) + chloride(in) + 2 Na(+)(in). The catalysed reaction is L-tryptophan(out) + chloride(out) + 2 Na(+)(out) = L-tryptophan(in) + chloride(in) + 2 Na(+)(in). It catalyses the reaction L-tyrosine(out) + chloride(out) + 2 Na(+)(out) = L-tyrosine(in) + chloride(in) + 2 Na(+)(in). It carries out the reaction L-histidine(out) + chloride(out) + 2 Na(+)(out) = L-histidine(in) + chloride(in) + 2 Na(+)(in). The enzyme catalyses L-lysine(out) + chloride(out) + 2 Na(+)(out) = L-lysine(in) + chloride(in) + 2 Na(+)(in). The catalysed reaction is O-butanoyl-(R)-carnitine(out) + chloride(out) + 2 Na(+)(out) = O-butanoyl-(R)-carnitine(in) + chloride(in) + 2 Na(+)(in). In terms of biological role, amino acid transporter that plays an important role in the absorption of amino acids in the intestinal tract. Mediates the uptake of a broad range of neutral and cationic amino acids (with the exception of proline) in a Na(+)/Cl(-)-dependent manner. Transports non-alpha-amino acids such as beta-alanine with low affinity, and has a higher affinity for dipolar and cationic amino acids such as leucine and lysine. Can also transport carnitine, butyrylcarnitine and propionylcarnitine coupled to the transmembrane gradients of Na(+) and Cl(-). In Mus musculus (Mouse), this protein is Sodium- and chloride-dependent neutral and basic amino acid transporter B(0+).